A 436-amino-acid chain; its full sequence is Probable G-protein coupled receptor C06G4.5 (436 aa).

At 1 to 53 (MSTNLVDYVDDSYLNQSMNSENGLDSVTQIMYDMKKYNIVNDVLPPPNHEDLH) the chain is on the extracellular side. Asparagine 15 carries N-linked (GlcNAc...) asparagine glycosylation. A helical membrane pass occupies residues 54 to 74 (VVIMAVSYLLLFLLGTCGNVA). Topologically, residues 75–94 (VLTTIYHVIRSSRATLDNTL) are cytoplasmic. Residues 95-115 (IYVIVLSCVDFGVCLSLPITV) form a helical membrane-spanning segment. The Extracellular segment spans residues 116-132 (IDQILGFWMFGKIPCKL). Residues 133–153 (HAVFENFGKILSALILTAMSF) traverse the membrane as a helical segment. At 154–171 (DRYAGVCHPQRKRLRSRN) the chain is on the cytoplasmic side. The chain crosses the membrane as a helical span at residues 172–192 (FAITILLVLAVYAFITLCPLL). Residues 193 to 230 (WSFTAREIILYAKETAPGMLTRMKIEKCTVDIDSQMFT) are Extracellular-facing. A helical transmembrane segment spans residues 231–251 (AFTIYQFILCYCTPLVLIAFF). The Cytoplasmic segment spans residues 252–281 (YTKLLSKLREHTRTFKSSQIPFLHISLYTL). A helical transmembrane segment spans residues 282-302 (AVACFYFLCWTPFWMATLFAV). Topologically, residues 303-316 (YLENSANSSSVPPV) are extracellular. A glycan (N-linked (GlcNAc...) asparagine) is linked at asparagine 309. The helical transmembrane segment at 317–337 (FVYIMYFIHALPFTNSAINWI) threads the bilayer. The Cytoplasmic segment spans residues 338–436 (LYGALNGQLQ…LLSNHNPTFL (99 aa)).

Belongs to the G-protein coupled receptor 1 family.

The protein localises to the cell membrane. Putative receptor. In Caenorhabditis elegans, this protein is Probable G-protein coupled receptor C06G4.5.